The primary structure comprises 390 residues: MKQIAILGSTGSIGVSTLEIVAAHPDKFRVLSLSGAKNLDLLARQIRQFRPRLAAVADPADIPRLKELLSGVEVELTGGVEGLCAAATAPGVQMVVAAIVGAAGLVPTAAAIRAGIDVALANKETLVTAGHLFMELVERHKVKLYPVDSEHSAIFQSIEGHRSQDITKIILTASGGPFRETPLEKLQSVTIQDALNHPNWSMGRKITIDSATMMNKGLEVIEARWLFDAPAEKISVNIHPQSIIHSMVEYIDGCVIAQLGTPDMKAPIAYALSYPERVSTGVKPLDLTELSGLTFSKPDLERFPCLGLAYRALGEGESMPAVMNAANEVAVEAFLDGRISYLQIAALIEKTMDAHQAHRLGSIEEVLEADRWGRATARDICNTLQTGRCL.

The NADPH site is built by Thr-10, Gly-11, Ser-12, Ile-13, Ala-36, Lys-37, Asn-38, and Asn-122. Lys-123 lines the 1-deoxy-D-xylulose 5-phosphate pocket. Glu-124 contacts NADPH. Residue Asp-148 coordinates Mn(2+). 1-deoxy-D-xylulose 5-phosphate is bound by residues Ser-149, Glu-150, Ser-174, and His-197. Residue Glu-150 coordinates Mn(2+). Gly-203 contributes to the NADPH binding site. 1-deoxy-D-xylulose 5-phosphate contacts are provided by Ser-210, Asn-215, Lys-216, and Glu-219. Glu-219 lines the Mn(2+) pocket.

It belongs to the DXR family. The cofactor is Mg(2+). Mn(2+) serves as cofactor.

The enzyme catalyses 2-C-methyl-D-erythritol 4-phosphate + NADP(+) = 1-deoxy-D-xylulose 5-phosphate + NADPH + H(+). Its pathway is isoprenoid biosynthesis; isopentenyl diphosphate biosynthesis via DXP pathway; isopentenyl diphosphate from 1-deoxy-D-xylulose 5-phosphate: step 1/6. Catalyzes the NADPH-dependent rearrangement and reduction of 1-deoxy-D-xylulose-5-phosphate (DXP) to 2-C-methyl-D-erythritol 4-phosphate (MEP). This is 1-deoxy-D-xylulose 5-phosphate reductoisomerase from Trichlorobacter lovleyi (strain ATCC BAA-1151 / DSM 17278 / SZ) (Geobacter lovleyi).